The chain runs to 232 residues: 2,3-bisphosphoglycerate-dependent phosphoglycerate mutase 1 (232 aa).

Substrate is bound by residues 8-15 (RHGQSLWN), 21-22 (TG), Arg-58, 114-117 (ERYY), Lys-125, 141-142 (RR), and 185-186 (GN). His-9 (tele-phosphohistidine intermediate) is an active-site residue. Glu-114 (proton donor/acceptor) is an active-site residue.

It belongs to the phosphoglycerate mutase family. BPG-dependent PGAM subfamily.

It carries out the reaction (2R)-2-phosphoglycerate = (2R)-3-phosphoglycerate. The protein operates within carbohydrate degradation; glycolysis; pyruvate from D-glyceraldehyde 3-phosphate: step 3/5. Its function is as follows. Catalyzes the interconversion of 2-phosphoglycerate and 3-phosphoglycerate. The sequence is that of 2,3-bisphosphoglycerate-dependent phosphoglycerate mutase 1 from Gloeobacter violaceus (strain ATCC 29082 / PCC 7421).